The following is a 464-amino-acid chain: GDNF family receptor alpha-2 (464 aa).

The N-terminal stretch at 1–21 (MILANAFCLFFFLDETLRSLA) is a signal peptide. 14 cysteine pairs are disulfide-bonded: Cys-40–Cys-93, Cys-47–Cys-53, Cys-63–Cys-78, Cys-95–Cys-105, Cys-161–Cys-222, Cys-168–Cys-174, Cys-185–Cys-200, Cys-195–Cys-241, Cys-224–Cys-229, Cys-251–Cys-323, Cys-258–Cys-264, Cys-275–Cys-293, Cys-285–Cys-347, and Cys-325–Cys-335. N-linked (GlcNAc...) asparagine glycosylation occurs at Asn-52. Residue Asn-357 is glycosylated (N-linked (GlcNAc...) asparagine). A disordered region spans residues 363-392 (MSPKGPTFSATQAPRVEKTPSLPDDLSDST). Over residues 381–392 (TPSLPDDLSDST) the composition is skewed to low complexity. Asn-413 carries an N-linked (GlcNAc...) asparagine glycan. Ser-443 carries GPI-anchor amidated serine lipidation. The propeptide at 444 to 464 (CRARLSTALTALPLLMVTLAQ) is removed in mature form.

The protein belongs to the GDNFR family. As to quaternary structure, interacts with NRTN ligand and RET: forms a 2:2:2 ternary complex composed of NRTN ligand, GFRA2 and RET receptor. Also forms a 4:4:4 tetrameric complex composed of 4 copies of NRTN ligand, GFRA2 and RET receptor, which prevents endocytosis of RET. Interacts with SORL1. Neurons of the superior cervical and dorsal root ganglia, and adult brain and testis. Low level in the substantia nigra, spleen and adrenal gland. Isoform 1, isoform 2 and isoform 3 are all expressed in brain, liver, ileum, spleen, heart and kidney. In brain, isoform 1 is most abundant, isoform 2 slightly less and isoform 3 is lowest. No significant levels of isoform 1, isoform 2 or isoform 3 expression in testis.

It is found in the cell membrane. Receptor for neurturin (NRTN), a growth factor that supports the survival of sympathetic neurons. NRTN-binding leads to autophosphorylation and activation of the RET receptor. Also able to mediate GDNF signaling through the RET tyrosine kinase receptor. In terms of biological role, participates in NRTN-induced 'Ser-727' phosphorylation of STAT3. This is GDNF family receptor alpha-2 from Mus musculus (Mouse).